The sequence spans 414 residues: Lipoyl synthase, mitochondrial (414 aa).

Residues 1–18 (MYRRSVGVLFVGRNTRWI) constitute a mitochondrion transit peptide. Residues 51 to 67 (GNSTEVENATSQLTGTS) show a composition bias toward polar residues. Positions 51–75 (GNSTEVENATSQLTGTSGKRRKGNR) are disordered. C150, C155, C161, C181, C185, C188, and S396 together coordinate [4Fe-4S] cluster. The region spanning 164 to 385 (GKDKSKATAT…KERALEMGFL (222 aa)) is the Radical SAM core domain.

This sequence belongs to the radical SAM superfamily. Lipoyl synthase family. It depends on [4Fe-4S] cluster as a cofactor.

The protein localises to the mitochondrion. It carries out the reaction [[Fe-S] cluster scaffold protein carrying a second [4Fe-4S](2+) cluster] + N(6)-octanoyl-L-lysyl-[protein] + 2 oxidized [2Fe-2S]-[ferredoxin] + 2 S-adenosyl-L-methionine + 4 H(+) = [[Fe-S] cluster scaffold protein] + N(6)-[(R)-dihydrolipoyl]-L-lysyl-[protein] + 4 Fe(3+) + 2 hydrogen sulfide + 2 5'-deoxyadenosine + 2 L-methionine + 2 reduced [2Fe-2S]-[ferredoxin]. The protein operates within protein modification; protein lipoylation via endogenous pathway; protein N(6)-(lipoyl)lysine from octanoyl-[acyl-carrier-protein]: step 2/2. Functionally, catalyzes the radical-mediated insertion of two sulfur atoms into the C-6 and C-8 positions of the octanoyl moiety bound to the lipoyl domains of lipoate-dependent enzymes, thereby converting the octanoylated domains into lipoylated derivatives. This Saccharomyces cerevisiae (strain RM11-1a) (Baker's yeast) protein is Lipoyl synthase, mitochondrial.